The primary structure comprises 235 residues: Large ribosomal subunit protein uL1 (235 aa).

This sequence belongs to the universal ribosomal protein uL1 family. As to quaternary structure, part of the 50S ribosomal subunit.

In terms of biological role, binds directly to 23S rRNA. The L1 stalk is quite mobile in the ribosome, and is involved in E site tRNA release. Functionally, protein L1 is also a translational repressor protein, it controls the translation of the L11 operon by binding to its mRNA. This is Large ribosomal subunit protein uL1 from Desulfovibrio desulfuricans (strain ATCC 27774 / DSM 6949 / MB).